Consider the following 165-residue polypeptide: uncharacterized protein (165 aa).

This is an uncharacterized protein from Rickettsia conorii (strain ATCC VR-613 / Malish 7).